Reading from the N-terminus, the 72-residue chain is Protein SlyX (72 aa).

This sequence belongs to the SlyX family.

This is Protein SlyX from Cronobacter sakazakii (strain ATCC BAA-894) (Enterobacter sakazakii).